Here is a 411-residue protein sequence, read N- to C-terminus: MAPAPKLINWKRNLFVAWLGCFLTGAAFSLIMPFLPLYVETLGVTGHQALNMWSGLVFSITFLFSAIASPFWGGLADRRGRKLMLLRSALGMSIVMLLMGMAQNIWQFLALRAVLGLLGGFIPNANALIATQVPRNRSGWALGTLSTGGVSGALIGPLIGGLLADQYGLRPVFYITAGVLLTCFVLTLLYVKEQFTPVQKKDMLHARQVFAALKSPKLILSLFVTTMIIQIATGSIAPILTLYVRDLAGDIHNLAFVSGLIASVPGVAALMSAPRLGKLGDRIGPERILVFMLIVSVLLLIPMAFVQTPWQLGVLRFLLGAADGALLPAVQTLLIYNCTNQVAGRIFSYNQSFRDIGNVSGPLMGAAVSASYGFRAVFCVTALVVLFNAVYSWWCLQRRPTRMREDTLQEE.

10 consecutive transmembrane segments (helical) span residues 14–34 (LFVAWLGCFLTGAAFSLIMPF), 56–76 (LVFSITFLFSAIASPFWGGLA), 89–109 (ALGMSIVMLLMGMAQNIWQFL), 113–133 (AVLGLLGGFIPNANALIATQV), 144–164 (TLSTGGVSGALIGPLIGGLLA), 171–191 (PVFYITAGVLLTCFVLTLLYV), 219–239 (ILSLFVTTMIIQIATGSIAPI), 254–274 (LAFVSGLIASVPGVAALMSAP), 288–308 (ILVFMLIVSVLLLIPMAFVQT), and 376–396 (AVFCVTALVVLFNAVYSWWCL).

This sequence belongs to the major facilitator superfamily. DHA1 family. MdtG (TC 2.A.1.2.20) subfamily.

The protein localises to the cell inner membrane. This chain is Multidrug resistance protein MdtG, found in Serratia proteamaculans (strain 568).